A 231-amino-acid chain; its full sequence is Large ribosomal subunit protein uL1 (231 aa).

Belongs to the universal ribosomal protein uL1 family. As to quaternary structure, part of the 50S ribosomal subunit.

Its function is as follows. Binds directly to 23S rRNA. The L1 stalk is quite mobile in the ribosome, and is involved in E site tRNA release. In terms of biological role, protein L1 is also a translational repressor protein, it controls the translation of the L11 operon by binding to its mRNA. The protein is Large ribosomal subunit protein uL1 of Pseudomonas fluorescens (strain Pf0-1).